A 278-amino-acid chain; its full sequence is Truncated FRIGIDA-like protein 1 (278 aa).

A coiled-coil region spans residues 1 to 36 (MTASETIATAINQIDEKKEKLKKAFDDLQAHRSLLS).

It belongs to the Frigida family.

Functionally, truncated inactive FRIGIDA-like 1 protein. The chain is Truncated FRIGIDA-like protein 1 (FRL1) from Arabidopsis thaliana (Mouse-ear cress).